The sequence spans 31 residues: Cyclotide mden-N (31 aa).

The segment at residues Gly1 to Asn31 is a cross-link (cyclopeptide (Gly-Asn)). 3 disulfide bridges follow: Cys5–Cys21, Cys9–Cys23, and Cys14–Cys28.

It belongs to the cyclotide family. Bracelet subfamily. This is a cyclic peptide.

In terms of biological role, probably participates in a plant defense mechanism. The protein is Cyclotide mden-N of Melicytus dentatus (Tree violet).